Reading from the N-terminus, the 863-residue chain is MNVQEQGFPLDLGASFTEDAPRPPVPGEEGELVSTDSRPVNHSFCSGKGTSIKSETSTATPRRSDLDLGYEPEGSASPTPPYLRWAESLHSLLDDQDGISLFRTFLKQEGCADLLDFWFACSGFRKLEPCDSNEEKRLKLARAIYRKYILDSNGIVSRQTKPATKSFIKDCVMKQQIDPAMFDQAQTEIQSTMEENTYPSFLKSDIYLEYTRTGSESPKVCSDQSSGSGTGKGMSGYLPTLNEDEEWKCDQDADEDDGRDPLPPSRLTQKLLLETAAPRAPSSRRYNEGRELRYGSWREPVNPYYVNSGYALAPATSANDSEQQSLSSDADTLSLTDSSVDGIPPYRIRKQHRREMQESIQVNGRVPLPHIPRTYRMPKEIRVEPQKFAEELIHRLEAVQRTREAEEKLEERLKRVRMEEEGEDGEMPSGPMASHKLPSVPAWHHFPPRYVDMGCSGLRDAHEENPESILDEHVQRVMRTPGCQSPGPGHRSPDSGHVAKTAVLGGTASGHGKHVPKLGLKLDTAGLHHHRHVHHHVHHNSARPKEQMEAEVARRVQSSFSWGPETHGHAKPRSYSENAGTTLSAGDLAFGGKTSAPSKRNTKKAESGKNANAEVPSTTEDAEKNQKIMQWIIEGEKEISRHRKAGHGSSGLRKQQAHESSRPLSIERPGAVHPWVSAQLRNSVQPSHLFIQDPTMPPNPAPNPLTQLEEARRRLEEEEKRANKLPSKQRYVQAVMQRGRTCVRPACAPVLSVVPAVSDLELSETETKSQRKAGGGSAPPCDSIVVAYYFCGEPIPYRTLVRGRAVTLGQFKELLTKKGSYRYYFKKVSDEFDCGVVFEEVREDEAVLPVFEEKIIGKVEKVD.

Residues 1–81 (MNVQEQGFPL…PEGSASPTPP (81 aa)) form a disordered region. The short motif at 20 to 29 (APRPPVPGEE) is the Tankyrase-binding motif element. Polar residues predominate over residues 34–61 (STDSRPVNHSFCSGKGTSIKSETSTATP). Position 75 is a phosphoserine (Ser75). Ser77 carries the phosphoserine; by CK1 modification. Residues 88–211 (SLHSLLDDQD…LKSDIYLEYT (124 aa)) form the RGS domain. Positions 209 to 338 (EYTRTGSESP…DADTLSLTDS (130 aa)) are interaction with TP53. 3 disordered regions span residues 215 to 240 (SESP…YLPT), 249 to 268 (CDQD…SRLT), and 315 to 344 (ATSA…DGIP). At Ser217 the chain carries Phosphoserine. The span at 249–258 (CDQDADEDDG) shows a compositional bias: acidic residues. Over residues 325 to 339 (SLSSDADTLSLTDSS) the composition is skewed to low complexity. The tract at residues 348-432 (IRKQHRREMQ…EDGEMPSGPM (85 aa)) is interaction with GSK3B. The interaction with SIAH1 stretch occupies residues 353 to 411 (RREMQESIQVNGRVPLPHIPRTYRMPKEIRVEPQKFAEELIHRLEAVQRTREAEEKLEE). The tract at residues 433-501 (ASHKLPSVPA…SPDSGHVAKT (69 aa)) is interaction with beta-catenin. The residue at position 468 (Ser468) is a Phosphoserine; by CK1. Thr480 carries the phosphothreonine; by GSK3-beta modification. The residue at position 485 (Ser485) is a Phosphoserine; by GSK3-beta. 2 positions are modified to phosphoserine: Ser492 and Ser509. The tract at residues 505–758 (GGTASGHGKH…PVLSVVPAVS (254 aa)) is interaction with RNF111. Basic residues predominate over residues 529–542 (HHRHVHHHVHHNSA). 2 disordered regions span residues 529–624 (HHRH…DAEK) and 642–664 (HRKA…SRPL). A compositionally biased stretch (basic and acidic residues) spans 543–554 (RPKEQMEAEVAR). The interval 572 to 790 (PRSYSENAGT…CDSIVVAYYF (219 aa)) is interaction with PPP2CA. A compositionally biased stretch (polar residues) spans 575-584 (YSENAGTTLS). Positions 678–753 (AQLRNSVQPS…RPACAPVLSV (76 aa)) are interaction with HIPK2. The DIX domain maps to 781-863 (CDSIVVAYYF…KIIGKVEKVD (83 aa)). Residues Lys858 and Lys861 each participate in a glycyl lysine isopeptide (Lys-Gly) (interchain with G-Cter in SUMO) cross-link.

In terms of assembly, homodimer. Component of the beta-catenin destruction complex, containing at least CTNNB1, an axin and GSK3B, that regulates CTNNB1 protein levels through phosphorylation and ubiquitination. Interacts with GSK3B; the interaction hyperphosphorylates CTNNB1 leading to its ubiquitination and destruction. Interacts with DAXX; the interaction stimulates the interaction of DAXX with TP53, stimulates 'Ser-46' phosphorylation of TP53 and induces cell death on UV irradiation. Also interacts with APC, RNF111, SMAD6 and SMAD7. Interacts (via the C-terminal) with PPP1CA; the interaction dephosphorylates AXIN1 and regulates interaction with GSK3B. Interacts with PPP2CA; the interaction dephosphorylates AXIN1. Interacts with MDFI; the interaction decreases AXIN1-mediated JUN N-terminal kinase (JNK) activation. Interacts with MDFIC; the interaction inhibits beta-cateninin-mediated signaling and AXIN1-mediated JUN N-terminal kinase (JNK) activation. Binds ANKRD6, PIAS1, PIAS2, PIAS4, SUMO1, MAP3K1 and MAP3K4. Component of the AXIN1-HIPK2-TP53 complex. Interacts directly in the complex with TP53 and HIPK2. Interacts with DIXDC1; the interaction prevents interaction with MAP3K1. Interacts with AIDA; the interaction blocks the AXIN1-mediated JNK activation through disrupting AXIN1 homodimerization and Wnt signaling. Interacts with LRP5 (via its phosphorylated PPPSP motifs); the interaction is stimulated by WNT1 and GSK3B and activates beta-catenin signaling. Interacts with CTNNB1 (via the armadillo repeats 2-7). Interacts with MACF1. Found in a complex composed of MACF1, APC, AXIN1, CTNNB1 and GSK3B. Interacts with TNKS. Interacts with DAB2; the interaction is mutually exclusive with the AXIN1:PPP1CA interaction. Interacts with ZBED3 (via PPPSP motif); the interaction is direct, enhanced by protein kinase GSK3B and casein kinase CSNK1E activities and decreases GSK3B-induced beta-catenin serine and threonine phosphorylations. Interacts with WDR26. Interacts with GID8. Interacts with SIAH1 and SIAH2; both probably catalyze AXIN1 ubiquitination and subsequent proteasome-mediated ubiquitin-dependent degradation. Interaction with GSK3B and AXIN1 is competitive. In terms of processing, phosphorylation and dephosphorylation of AXIN1 regulates assembly and function of the beta-catenin complex. Phosphorylated by CK1 and GSK3B. Dephosphorylated by PPP1CA and PPP2CA. Phosphorylation by CK1 enhances binding of GSK3B to AXIN1. Also phosphorylated by CDK2 which regulates interaction with CTNBB1. Post-translationally, ADP-ribosylated by tankyrase TNKS and TNKS2. Poly-ADP-ribosylated protein is recognized by RNF146, followed by ubiquitination and subsequent activation of the Wnt signaling pathway. Ubiquitinated by RNF146 when poly-ADP-ribosylated, leading to its degradation and subsequent activation of the Wnt signaling pathway. Deubiquitinated by USP34, deubiquitinated downstream of beta-catenin stabilization step: deubiquitination is important for nuclear accumulation during Wnt signaling to positively regulate beta-catenin (CTNBB1)-mediated transcription. Sumoylation at Lys-858 and Lys-861 prevents ubiquitination and degradation. Sumoylation is required for AXIN1-mediated JNK activation. Ubiquitination by SIAH1 and SIAH2 induces its proteasomal degradation as part of the activation of the Wnt signaling pathway. Expressed in embryonic stem cells.

It is found in the cytoplasm. It localises to the nucleus. Its subcellular location is the cell membrane. The protein resides in the membrane. Functionally, component of the beta-catenin destruction complex required for regulating CTNNB1 levels through phosphorylation and ubiquitination, and modulating Wnt-signaling. Controls dorsoventral patterning via two opposing effects; down-regulates CTNNB1 to inhibit the Wnt signaling pathway and ventralize embryos, but also dorsalizes embryos by activating a Wnt-independent JNK signaling pathway. In Wnt signaling, probably facilitates the phosphorylation of CTNNB1 and APC by GSK3B. Likely to function as a tumor suppressor. Facilitates the phosphorylation of TP53 by HIPK2 upon ultraviolet irradiation. Enhances TGF-beta signaling by recruiting the RNF111 E3 ubiquitin ligase and promoting the degradation of inhibitory SMAD7. Also a component of the AXIN1-HIPK2-TP53 complex which controls cell growth, apoptosis and development. This is Axin-1 (Axin1) from Mus musculus (Mouse).